Consider the following 459-residue polypeptide: Glycosyl hydrolase family 109 protein 1 (459 aa).

Positions 1–31 form a signal peptide, tat-type signal; sequence MHNIHRRHFLKAAGAVTAGLVTANIALNANA. Residues 64-65, aspartate 86, 135-138, 155-156, and asparagine 184 each bind NAD(+); these read ER, WEWH, and EV. Substrate-binding positions include tyrosine 213, arginine 232, 244-247, and tyrosine 326; that span reads YPTH. NAD(+) is bound at residue tyrosine 244.

Belongs to the Gfo/Idh/MocA family. Glycosyl hydrolase 109 subfamily. Requires NAD(+) as cofactor. Post-translationally, predicted to be exported by the Tat system. The position of the signal peptide cleavage has not been experimentally proven.

Glycosidase. This Shewanella sp. (strain MR-7) protein is Glycosyl hydrolase family 109 protein 1.